We begin with the raw amino-acid sequence, 356 residues long: Phosphoserine aminotransferase (356 aa).

An L-glutamate-binding site is contributed by R41. Residues 76 to 77, W102, T150, D169, and Q192 each bind pyridoxal 5'-phosphate; that span reads AS. N6-(pyridoxal phosphate)lysine is present on K193. Pyridoxal 5'-phosphate is bound at residue 234–235; it reads NT.

Belongs to the class-V pyridoxal-phosphate-dependent aminotransferase family. SerC subfamily. In terms of assembly, homodimer. Pyridoxal 5'-phosphate serves as cofactor.

The protein resides in the cytoplasm. The catalysed reaction is O-phospho-L-serine + 2-oxoglutarate = 3-phosphooxypyruvate + L-glutamate. It carries out the reaction 4-(phosphooxy)-L-threonine + 2-oxoglutarate = (R)-3-hydroxy-2-oxo-4-phosphooxybutanoate + L-glutamate. It functions in the pathway amino-acid biosynthesis; L-serine biosynthesis; L-serine from 3-phospho-D-glycerate: step 2/3. Its pathway is cofactor biosynthesis; pyridoxine 5'-phosphate biosynthesis; pyridoxine 5'-phosphate from D-erythrose 4-phosphate: step 3/5. In terms of biological role, catalyzes the reversible conversion of 3-phosphohydroxypyruvate to phosphoserine and of 3-hydroxy-2-oxo-4-phosphonooxybutanoate to phosphohydroxythreonine. The protein is Phosphoserine aminotransferase of Flavobacterium psychrophilum (strain ATCC 49511 / DSM 21280 / CIP 103535 / JIP02/86).